Reading from the N-terminus, the 996-residue chain is PDZ domain-containing protein C23G3.12c (996 aa).

Residues 1 to 35 are disordered; sequence MSIKKRARAGSKSDDIGNKTPKKNGIEHEATKSSE. PDZ domains follow at residues 280–358, 745–827, and 860–930; these read SRLG…QRGS, EFRA…LREG, and RAVR…STFD. Residues 972-996 are disordered; the sequence is KNPSMGFTIDEEVDDNTFDTEGEQQ. Acidic residues predominate over residues 980–996; that stretch reads IDEEVDDNTFDTEGEQQ.

This sequence belongs to the peptidase S1C family.

This is PDZ domain-containing protein C23G3.12c from Schizosaccharomyces pombe (strain 972 / ATCC 24843) (Fission yeast).